A 442-amino-acid chain; its full sequence is UDP-N-acetylmuramate--L-alanine ligase (442 aa).

G109–S115 provides a ligand contact to ATP.

This sequence belongs to the MurCDEF family.

The protein resides in the cytoplasm. The enzyme catalyses UDP-N-acetyl-alpha-D-muramate + L-alanine + ATP = UDP-N-acetyl-alpha-D-muramoyl-L-alanine + ADP + phosphate + H(+). It functions in the pathway cell wall biogenesis; peptidoglycan biosynthesis. Its function is as follows. Cell wall formation. The sequence is that of UDP-N-acetylmuramate--L-alanine ligase from Streptococcus pyogenes serotype M49 (strain NZ131).